A 278-amino-acid polypeptide reads, in one-letter code: Malonyl-[acyl-carrier protein] O-methyltransferase (278 aa).

The protein belongs to the methyltransferase superfamily.

It catalyses the reaction malonyl-[ACP] + S-adenosyl-L-methionine = malonyl-[ACP] methyl ester + S-adenosyl-L-homocysteine. It participates in cofactor biosynthesis; biotin biosynthesis. Functionally, converts the free carboxyl group of a malonyl-thioester to its methyl ester by transfer of a methyl group from S-adenosyl-L-methionine (SAM). It allows to synthesize pimeloyl-ACP via the fatty acid synthetic pathway. The sequence is that of Malonyl-[acyl-carrier protein] O-methyltransferase from Brevibacillus brevis (strain 47 / JCM 6285 / NBRC 100599).